A 664-amino-acid chain; its full sequence is uncharacterized protein (664 aa).

This is an uncharacterized protein from Sinorhizobium fredii (strain NBRC 101917 / NGR234).